Consider the following 64-residue polypeptide: uncharacterized protein (64 aa).

This is an uncharacterized protein from Sulfolobus islandicus rod-shaped virus 1 (SIRV-1).